We begin with the raw amino-acid sequence, 295 residues long: MSKIPSVNIKALLDAGVHFGHKTSRWNPKMASYIYGERDDVHIIDLRQSVALMSVALNAIYETVKKDGKILFVSTKIQASDIIAEYAEKCGQYYVNHRWLGGMLTNWKTIAGSIEKLNKLDKTLENEEALMGYTKKEILNMSRKKDKLLLSLAGIRNLNSKPDLLVVIDTNKEHIAINEAVKLNVPIVAVVDTNSNPDNVDYPIPGNDDSIRAIRLYCSLFADAALQGLEESMKASGVDMGAMQEHTDKGLTSKNVSKLKQTKKFSKTKNIDEETNTEFEQALNDADENKNSDNA.

The segment at 247 to 295 is disordered; sequence TDKGLTSKNVSKLKQTKKFSKTKNIDEETNTEFEQALNDADENKNSDNA.

The protein belongs to the universal ribosomal protein uS2 family.

In Rickettsia conorii (strain ATCC VR-613 / Malish 7), this protein is Small ribosomal subunit protein uS2.